Here is a 916-residue protein sequence, read N- to C-terminus: Chitin synthase B (916 aa).

Disordered stretches follow at residues 1-84 (MAYQ…AGFH) and 114-141 (SPYARSETSSTEAWRQRQAPGGGGGGGL). The N-linked (GlcNAc...) asparagine glycan is linked to N18. Polar residues predominate over residues 60 to 75 (RGTSPVRPTSGYSLTE). N-linked (GlcNAc...) asparagine glycosylation is present at N546. The next 7 helical transmembrane spans lie at 572-594 (MFFLHIQMLYNVFNTILTWFSLA), 628-648 (IINTIVKYVYLGLLLLQFILA), 663-683 (SFVVFGIIQIYVVVDALYLVV), 715-735 (IIIIALAATFGLYFVASFMYL), 743-763 (SFPAYMFVQSSYINVLNVYAF), 845-865 (LVTLWIFSNAFLAVCITSDGM), and 884-904 (ALLWSNAAVALVRFIGACWFL).

Belongs to the chitin synthase family. Class III subfamily.

The protein resides in the cell membrane. It carries out the reaction [(1-&gt;4)-N-acetyl-beta-D-glucosaminyl](n) + UDP-N-acetyl-alpha-D-glucosamine = [(1-&gt;4)-N-acetyl-beta-D-glucosaminyl](n+1) + UDP + H(+). In terms of biological role, polymerizes chitin, a structural polymer of the cell wall and septum, by transferring the sugar moiety of UDP-GlcNAc to the non-reducing end of the growing chitin polymer. Involved in hyphal growth and more particularly in branching. The protein is Chitin synthase B of Aspergillus oryzae (strain ATCC 42149 / RIB 40) (Yellow koji mold).